The sequence spans 493 residues: Lysine--tRNA ligase (493 aa).

Mg(2+) contacts are provided by glutamate 400 and glutamate 407.

Belongs to the class-II aminoacyl-tRNA synthetase family. Homodimer. Requires Mg(2+) as cofactor.

The protein localises to the cytoplasm. It carries out the reaction tRNA(Lys) + L-lysine + ATP = L-lysyl-tRNA(Lys) + AMP + diphosphate. This is Lysine--tRNA ligase from Syntrophomonas wolfei subsp. wolfei (strain DSM 2245B / Goettingen).